A 112-amino-acid polypeptide reads, in one-letter code: UPF0235 protein Atu2660 (112 aa).

This sequence belongs to the UPF0235 family.

This chain is UPF0235 protein Atu2660, found in Agrobacterium fabrum (strain C58 / ATCC 33970) (Agrobacterium tumefaciens (strain C58)).